Consider the following 198-residue polypeptide: Dual specificity protein phosphatase 13B (198 aa).

The Tyrosine-protein phosphatase domain occupies 45-193 (HIDEVWPSLF…LQVLDNRLGR (149 aa)). Catalysis depends on C138, which acts as the Phosphocysteine intermediate.

This sequence belongs to the protein-tyrosine phosphatase family. Non-receptor class dual specificity subfamily. Highly expressed in the testis (at protein level). Also found in the skeletal muscle.

The catalysed reaction is O-phospho-L-tyrosyl-[protein] + H2O = L-tyrosyl-[protein] + phosphate. It carries out the reaction O-phospho-L-seryl-[protein] + H2O = L-seryl-[protein] + phosphate. It catalyses the reaction O-phospho-L-threonyl-[protein] + H2O = L-threonyl-[protein] + phosphate. Its function is as follows. Dual specificity phosphatase that dephosphorylates MAPK8/JNK and MAPK14/p38, but not MAPK1/ERK2, in vitro. Exhibits intrinsic phosphatase activity towards both phospho-seryl/threonyl and -tyrosyl residues, with similar specific activities in vitro. This Homo sapiens (Human) protein is Dual specificity protein phosphatase 13B.